A 141-amino-acid polypeptide reads, in one-letter code: Endoribonuclease YbeY (141 aa).

Residues His105, His109, and Asp115 each coordinate Zn(2+).

Belongs to the endoribonuclease YbeY family. It depends on Zn(2+) as a cofactor.

It is found in the cytoplasm. Functionally, single strand-specific metallo-endoribonuclease involved in late-stage 70S ribosome quality control and in maturation of the 3' terminus of the 16S rRNA. The protein is Endoribonuclease YbeY of Chlorobaculum parvum (strain DSM 263 / NCIMB 8327) (Chlorobium vibrioforme subsp. thiosulfatophilum).